We begin with the raw amino-acid sequence, 86 residues long: Large ribosomal subunit protein bL27 (86 aa).

Residues 1–10 (MAQKKGGGST) are compositionally biased toward gly residues. The tract at residues 1 to 21 (MAQKKGGGSTRNGRDSESKRL) is disordered.

This sequence belongs to the bacterial ribosomal protein bL27 family.

The polypeptide is Large ribosomal subunit protein bL27 (Cupriavidus taiwanensis (strain DSM 17343 / BCRC 17206 / CCUG 44338 / CIP 107171 / LMG 19424 / R1) (Ralstonia taiwanensis (strain LMG 19424))).